Reading from the N-terminus, the 202-residue chain is Transmembrane 4 L6 family member 1 (202 aa).

At 1–9 (MCSSKCTRY) the chain is on the cytoplasmic side. A helical transmembrane segment spans residues 10-30 (IGHSLVVFAVLCIVANILLYF). Residues 31–49 (PNGETKYAYEDHLSRFVWF) are Extracellular-facing. Residues 50–70 (FAGIVGGGLLILLPAFVFLGL) form a helical membrane-spanning segment. Residues 71–93 (EGEDCCGCWSCENYGKRCTMLSS) lie on the Cytoplasmic side of the membrane. The chain crosses the membrane as a helical span at residues 94–114 (IMAALIGIAGSGYCVIVAALG). The Extracellular segment spans residues 115–161 (LAEGPKCGDSHGMWNYTFANTDGQYLLDPTTWSKCHEPNNIVEWNVT). N-linked (GlcNAc...) asparagine glycans are attached at residues asparagine 129 and asparagine 159. The helical transmembrane segment at 162–182 (LFSILLALGGLEFILCLIQVI) threads the bilayer. Residues 183 to 202 (NGVLEGMCSYCCSHQQQYDC) are Cytoplasmic-facing.

It belongs to the L6 tetraspanin family. In terms of assembly, present in high molecular weight complexes in tumor cells. Interacts with SDCBP2.

It is found in the membrane. The protein is Transmembrane 4 L6 family member 1 (TM4SF1) of Mesocricetus auratus (Golden hamster).